Consider the following 248-residue polypeptide: Probable transcriptional regulatory protein Nwi_2729 (248 aa).

The segment at 1-21 (MAGHSQFKNIMHRKGRQDAQK) is disordered.

Belongs to the TACO1 family.

It localises to the cytoplasm. The chain is Probable transcriptional regulatory protein Nwi_2729 from Nitrobacter winogradskyi (strain ATCC 25391 / DSM 10237 / CIP 104748 / NCIMB 11846 / Nb-255).